The primary structure comprises 232 residues: tRNA1(Val) (adenine(37)-N6)-methyltransferase (232 aa).

This sequence belongs to the methyltransferase superfamily. tRNA (adenine-N(6)-)-methyltransferase family.

The protein resides in the cytoplasm. It catalyses the reaction adenosine(37) in tRNA1(Val) + S-adenosyl-L-methionine = N(6)-methyladenosine(37) in tRNA1(Val) + S-adenosyl-L-homocysteine + H(+). In terms of biological role, specifically methylates the adenine in position 37 of tRNA(1)(Val) (anticodon cmo5UAC). This is tRNA1(Val) (adenine(37)-N6)-methyltransferase from Haemophilus influenzae (strain PittGG).